The following is a 226-amino-acid chain: Endonuclease NucS (226 aa).

It belongs to the NucS endonuclease family.

The protein localises to the cytoplasm. Cleaves both 3' and 5' ssDNA extremities of branched DNA structures. The chain is Endonuclease NucS from Mycobacterium ulcerans (strain Agy99).